Here is a 476-residue protein sequence, read N- to C-terminus: 3-isopropylmalate dehydratase large subunit (476 aa).

Cys353, Cys413, and Cys416 together coordinate [4Fe-4S] cluster.

The protein belongs to the aconitase/IPM isomerase family. LeuC type 1 subfamily. In terms of assembly, heterodimer of LeuC and LeuD. [4Fe-4S] cluster is required as a cofactor.

The enzyme catalyses (2R,3S)-3-isopropylmalate = (2S)-2-isopropylmalate. The protein operates within amino-acid biosynthesis; L-leucine biosynthesis; L-leucine from 3-methyl-2-oxobutanoate: step 2/4. Catalyzes the isomerization between 2-isopropylmalate and 3-isopropylmalate, via the formation of 2-isopropylmaleate. The chain is 3-isopropylmalate dehydratase large subunit from Yersinia pseudotuberculosis serotype IB (strain PB1/+).